Consider the following 112-residue polypeptide: Ribonuclease VapC8 (112 aa).

Residues 10-109 (LLDTSVFIAR…TDALIAATAE (100 aa)) form the PINc domain. Mg(2+) contacts are provided by aspartate 12 and aspartate 101.

This sequence belongs to the PINc/VapC protein family. Requires Mg(2+) as cofactor.

Functionally, toxic component of a type II toxin-antitoxin (TA) system. An RNase. The cognate antitoxin is VapB8. The polypeptide is Ribonuclease VapC8 (vapC8) (Mycobacterium tuberculosis (strain CDC 1551 / Oshkosh)).